The following is a 361-amino-acid chain: Holliday junction branch migration complex subunit RuvB (361 aa).

The interval 1-183 (MAEPSLVAAG…FGFTGHLEFY (183 aa)) is large ATPase domain (RuvB-L). Residues Leu22, Arg23, Gly64, Lys67, Thr68, Thr69, 130-132 (EDF), Arg173, Tyr183, and Arg220 contribute to the ATP site. Position 68 (Thr68) interacts with Mg(2+). Positions 184–254 (SVPELELVLR…SASAALDMYE (71 aa)) are small ATPAse domain (RuvB-S). The head domain (RuvB-H) stretch occupies residues 257–361 (KKGLDRLDRS…VTGEWAPESQ (105 aa)). Residues Arg312 and Arg317 each coordinate DNA.

This sequence belongs to the RuvB family. In terms of assembly, homohexamer. Forms an RuvA(8)-RuvB(12)-Holliday junction (HJ) complex. HJ DNA is sandwiched between 2 RuvA tetramers; dsDNA enters through RuvA and exits via RuvB. An RuvB hexamer assembles on each DNA strand where it exits the tetramer. Each RuvB hexamer is contacted by two RuvA subunits (via domain III) on 2 adjacent RuvB subunits; this complex drives branch migration. In the full resolvosome a probable DNA-RuvA(4)-RuvB(12)-RuvC(2) complex forms which resolves the HJ.

It localises to the cytoplasm. It catalyses the reaction ATP + H2O = ADP + phosphate + H(+). The RuvA-RuvB-RuvC complex processes Holliday junction (HJ) DNA during genetic recombination and DNA repair, while the RuvA-RuvB complex plays an important role in the rescue of blocked DNA replication forks via replication fork reversal (RFR). RuvA specifically binds to HJ cruciform DNA, conferring on it an open structure. The RuvB hexamer acts as an ATP-dependent pump, pulling dsDNA into and through the RuvAB complex. RuvB forms 2 homohexamers on either side of HJ DNA bound by 1 or 2 RuvA tetramers; 4 subunits per hexamer contact DNA at a time. Coordinated motions by a converter formed by DNA-disengaged RuvB subunits stimulates ATP hydrolysis and nucleotide exchange. Immobilization of the converter enables RuvB to convert the ATP-contained energy into a lever motion, pulling 2 nucleotides of DNA out of the RuvA tetramer per ATP hydrolyzed, thus driving DNA branch migration. The RuvB motors rotate together with the DNA substrate, which together with the progressing nucleotide cycle form the mechanistic basis for DNA recombination by continuous HJ branch migration. Branch migration allows RuvC to scan DNA until it finds its consensus sequence, where it cleaves and resolves cruciform DNA. This Pseudarthrobacter chlorophenolicus (strain ATCC 700700 / DSM 12829 / CIP 107037 / JCM 12360 / KCTC 9906 / NCIMB 13794 / A6) (Arthrobacter chlorophenolicus) protein is Holliday junction branch migration complex subunit RuvB.